Here is a 428-residue protein sequence, read N- to C-terminus: Cholesterol 7-desaturase (428 aa).

The chain crosses the membrane as a helical span at residues isoleucine 6–leucine 26. The Rieske domain occupies tryptophan 81–leucine 187. The [2Fe-2S] cluster site is built by cysteine 122, histidine 124, cysteine 143, and histidine 146.

This sequence belongs to the cholesterol 7-desaturase family. Requires [2Fe-2S] cluster as cofactor. In terms of tissue distribution, expressed in intestine at all postembryonic stages, including dauer. Expression is reduced in daf-2 mutants.

Its subcellular location is the membrane. It catalyses the reaction cholesterol + NADPH + O2 + H(+) = 7-dehydrocholesterol + NADP(+) + 2 H2O. The catalysed reaction is cholesterol + NADH + O2 + H(+) = 7-dehydrocholesterol + NAD(+) + 2 H2O. It functions in the pathway steroid hormone biosynthesis; dafachronic acid biosynthesis. In terms of biological role, catalyzes the production of 7-dehydrocholesterol (7-DHC or cholesta-5,7-dien-3beta-ol) by inserting a double bond (desaturating) at the C7-C8 single bond of cholesterol. This reaction is the first step in the synthesis of the steroid hormone Delta(7)-dafachronic acid (one of the principal steroid hormones in nematodes). Dafachronic acids bind directly to the nuclear hormone receptor (NHR) daf-12, suppressing dauer formation and inducing reproductive growth. This chain is Cholesterol 7-desaturase (daf-36), found in Caenorhabditis elegans.